The sequence spans 322 residues: 4-hydroxythreonine-4-phosphate dehydrogenase (322 aa).

Substrate is bound by residues H131 and T132. Residues H161, H206, and H259 each coordinate a divalent metal cation. Substrate is bound by residues K267, N276, and R285.

This sequence belongs to the PdxA family. As to quaternary structure, homodimer. The cofactor is a divalent metal cation.

Its subcellular location is the cytoplasm. It catalyses the reaction 4-(phosphooxy)-L-threonine + NAD(+) = 3-amino-2-oxopropyl phosphate + CO2 + NADH. The protein operates within cofactor biosynthesis; pyridoxine 5'-phosphate biosynthesis; pyridoxine 5'-phosphate from D-erythrose 4-phosphate: step 4/5. Catalyzes the NAD(P)-dependent oxidation of 4-(phosphooxy)-L-threonine (HTP) into 2-amino-3-oxo-4-(phosphooxy)butyric acid which spontaneously decarboxylates to form 3-amino-2-oxopropyl phosphate (AHAP). In Sulfurihydrogenibium sp. (strain YO3AOP1), this protein is 4-hydroxythreonine-4-phosphate dehydrogenase.